Here is a 138-residue protein sequence, read N- to C-terminus: Small ribosomal subunit protein uS12 (138 aa).

Residues M1–K20 form a disordered region. A 3-methylthioaspartic acid modification is found at D102. Residues D116–N138 are disordered.

It belongs to the universal ribosomal protein uS12 family. Part of the 30S ribosomal subunit. Contacts proteins S8 and S17. May interact with IF1 in the 30S initiation complex.

Functionally, with S4 and S5 plays an important role in translational accuracy. In terms of biological role, interacts with and stabilizes bases of the 16S rRNA that are involved in tRNA selection in the A site and with the mRNA backbone. Located at the interface of the 30S and 50S subunits, it traverses the body of the 30S subunit contacting proteins on the other side and probably holding the rRNA structure together. The combined cluster of proteins S8, S12 and S17 appears to hold together the shoulder and platform of the 30S subunit. The protein is Small ribosomal subunit protein uS12 of Metamycoplasma arthritidis (strain 158L3-1) (Mycoplasma arthritidis).